Here is a 490-residue protein sequence, read N- to C-terminus: Probable G-protein coupled receptor npr-8 (490 aa).

Residues 1–55 (MEVKDIDNYCDRGISPNASNYLTYPFDGLCLQKFFYQLQTSLRRFTPYEEIIYTT) lie on the Extracellular side of the membrane. An N-linked (GlcNAc...) asparagine glycan is attached at asparagine 17. A helical transmembrane segment spans residues 56-76 (VYIIISVAAVIGNGLVIMAVV). At 77–86 (RKKTMRTNRN) the chain is on the cytoplasmic side. Residues 87 to 107 (VLILNLALSNLILAITNIPFL) form a helical membrane-spanning segment. Topologically, residues 108–125 (WLPSIDFEFPYSRFFCKF) are extracellular. The chain crosses the membrane as a helical span at residues 126–146 (ANVLPGSNIYCSTLTISVMAI). Residues 147-166 (DRYYSVKKLKIASNRKQCFH) lie on the Cytoplasmic side of the membrane. Residues 167-187 (AVLVSLAIWIVSFILSLPLLL) form a helical membrane-spanning segment. At 188–236 (YYETSMLYVMREIRVVDQSGQEVIRSYGWRQCRLVSAGRLPDITQSIQL) the chain is on the extracellular side. Residues 237-257 (LMSILQVAFLYIVPLFVLSIF) traverse the membrane as a helical segment. The Cytoplasmic portion of the chain corresponds to 258-331 (NVKLTRFLKT…QRTNRTTSLL (74 aa)). Positions 272–322 (MSKTRAPPKRFDRSDSHHNSLKNNNNHTSSLRSPSMPSIRSSITERNKTNQ) are disordered. The span at 280-289 (KRFDRSDSHH) shows a compositional bias: basic and acidic residues. The span at 292-313 (LKNNNNHTSSLRSPSMPSIRSS) shows a compositional bias: low complexity. Residues 332-352 (IAMAGSYAALWFPFTLITFLI) form a helical membrane-spanning segment. Residues 353–374 (DFELIINQDYVNLVERIDQTCK) lie on the Extracellular side of the membrane. Residues 375-395 (MVSMLSICVNPFLYGFLNTNF) form a helical membrane-spanning segment. Over 396–490 (RHEFSDIYYR…DDDIEKDSFV (95 aa)) the chain is Cytoplasmic.

The protein belongs to the G-protein coupled receptor 1 family.

It is found in the cell membrane. Not known. Putative receptor. The polypeptide is Probable G-protein coupled receptor npr-8 (Caenorhabditis elegans).